The following is a 76-amino-acid chain: Conotoxin VnMSGL-0112 (76 aa).

Positions 1–20 (MSGLGIMVLTLLLLVSMATS) are cleaved as a signal peptide. Positions 21–45 (HQDGRGKQATQRDAINVRRRRSITR) are excised as a propeptide. 3 cysteine pairs are disulfide-bonded: Cys-49–Cys-61, Cys-53–Cys-70, and Cys-60–Cys-74.

It belongs to the conotoxin O3 superfamily. As to expression, expressed by the venom duct.

The protein resides in the secreted. This chain is Conotoxin VnMSGL-0112, found in Conus ventricosus (Mediterranean cone).